A 446-amino-acid polypeptide reads, in one-letter code: Glutamine synthetase (446 aa).

In terms of domain architecture, GS beta-grasp spans 15-103 (ENVKFLRLQI…LICDVYYPDG (89 aa)). One can recognise a GS catalytic domain in the interval 110-446 (PRYVLKRQIE…WELDRYLATY (337 aa)). Mg(2+) contacts are provided by E134 and E136. An ATP-binding site is contributed by E186. E191 and E198 together coordinate Mg(2+). L-glutamate is bound by residues 242–243 (NG) and G243. H247 contributes to the Mg(2+) binding site. S251 contributes to the ATP binding site. L-glutamate-binding residues include R300, E306, and R318. Residues R318 and R323 each contribute to the ATP site. E335 contacts Mg(2+). R337 contacts L-glutamate.

It belongs to the glutamine synthetase family. Interacts with GCBP (TTHA1554). It depends on Mg(2+) as a cofactor.

The protein resides in the cytoplasm. It carries out the reaction L-glutamate + NH4(+) + ATP = L-glutamine + ADP + phosphate + H(+). Its activity is regulated as follows. Activity increases by approximately two-fold in the presence of GCBP. Functionally, catalyzes the ATP-dependent biosynthesis of glutamine from glutamate and ammonia. In Thermus thermophilus (strain ATCC 27634 / DSM 579 / HB8), this protein is Glutamine synthetase.